Consider the following 398-residue polypeptide: Cholinephosphotransferase 1 (398 aa).

The residue at position 2 (A2) is an N-acetylalanine. Over 2-62 (AAGAGARPAP…LLQWIPLWIA (61 aa)) the chain is Cytoplasmic. Residues 63 to 83 (PNTITLFGLAINLFTTLVLIF) form a helical membrane-spanning segment. N64 contacts CDP-choline. The Lumenal segment spans residues 84-93 (YCPTVTEEAP). A helical transmembrane segment spans residues 94 to 118 (YWTYLLCALGLFIYQSLDAIDGKQA). 2 residues coordinate Mg(2+): D111 and D114. R119 contacts CDP-choline. Topologically, residues 119–125 (RRTNSCS) are cytoplasmic. The chain crosses the membrane as a helical span at residues 126 to 150 (PLGELFDHGCDSLSTVFMAIGASIA). A Mg(2+)-binding site is contributed by D132. H133 functions as the Proton acceptor in the catalytic mechanism. A Mg(2+)-binding site is contributed by D136. Residues 151–160 (VRLGTHPDWL) lie on the Lumenal side of the membrane. Residues 161–179 (FFCSFVGMFMFYCAHWQTY) form a helical membrane-spanning segment. Residues 180–190 (VSGVLRFGRVD) lie on the Cytoplasmic side of the membrane. The helical transmembrane segment at 191–207 (VTEIQVALVIVFLLSTF) threads the bilayer. Over 208–222 (GGAMMWDYTIPILEI) the chain is Lumenal. Residues 223-248 (KLKILPVLGVVGGLIFSCSNYFHVIL) traverse the membrane as a helical segment. Topologically, residues 249 to 265 (HGGVGKNGSTIAGTSVL) are cytoplasmic. Residues 266–281 (SPGLHIGLIIILAIMI) traverse the membrane as a helical segment. Residues 282–293 (YKKSATNVFEKH) lie on the Lumenal side of the membrane. The helical transmembrane segment at 294-316 (PCLYTLMFGCVFAKVAQKLVIAH) threads the bilayer. The Cytoplasmic portion of the chain corresponds to 317-329 (MTKSELYLQDTVF). The helical transmembrane segment at 330-339 (IGPGLLFLDQ) threads the bilayer. Over 340–346 (YFNNFID) the chain is Lumenal. A helical membrane pass occupies residues 347-376 (EYVVLWIAMVITSFDMMIYFSSLCLQISRH). The Cytoplasmic segment spans residues 377–398 (LHLSIFKTSYQQAPEQVHKHID).

Belongs to the CDP-alcohol phosphatidyltransferase class-I family. Mg(2+) is required as a cofactor. The cofactor is Mn(2+).

It localises to the golgi apparatus membrane. It carries out the reaction CDP-choline + a 1,2-diacyl-sn-glycerol = a 1,2-diacyl-sn-glycero-3-phosphocholine + CMP + H(+). The catalysed reaction is 1-octadecanoyl-2-(5Z,8Z,11Z,14Z-eicosatetraenoyl)-sn-glycerol + CDP-choline = 1-octadecanoyl-2-(5Z,8Z,11Z,14Z-eicosatetraenoyl)-sn-glycero-3-phosphocholine + CMP + H(+). The enzyme catalyses 1-hexadecanoyl-2-(9Z-octadecenoyl)-sn-glycerol + CDP-choline = 1-hexadecanoyl-2-(9Z-octadecenoyl)-sn-glycero-3-phosphocholine + CMP + H(+). It catalyses the reaction 1-hexadecanoyl-2-(4Z,7Z,10Z,13Z,16Z,19Z-docosahexaenoyl)-sn-glycerol + CDP-choline = 1-hexadecanoyl-2-(4Z,7Z,10Z,13Z,16Z,19Z-docosahexaenoyl)-sn-glycero-3-phosphocholine + CMP + H(+). It carries out the reaction 1,2-dioctanoyl-sn-glycerol + CDP-choline = 1,2-dioctanoyl-sn-glycero-3-phosphocholine + CMP + H(+). It functions in the pathway phospholipid metabolism; phosphatidylcholine biosynthesis; phosphatidylcholine from phosphocholine: step 2/2. Its function is as follows. Catalyzes the final step of de novo phosphatidylcholine (PC) synthesis, i.e. the transfer of choline phosphate from CDP-choline to the free hydroxyl of a diacylglycerol (DAG), producing a PC. It thereby plays a central role in the formation and maintenance of vesicular membranes. The sequence is that of Cholinephosphotransferase 1 from Rattus norvegicus (Rat).